Reading from the N-terminus, the 610-residue chain is UvrABC system protein C (610 aa).

The GIY-YIG domain occupies 16 to 94; sequence SQPGVYRMYD…IKLYQPRYNV (79 aa). Residues 204–239 form the UVR domain; the sequence is DQVLTQLIARMEKASQDLAFEEAARIRDQIQAVRRV.

It belongs to the UvrC family. As to quaternary structure, interacts with UvrB in an incision complex.

The protein resides in the cytoplasm. Functionally, the UvrABC repair system catalyzes the recognition and processing of DNA lesions. UvrC both incises the 5' and 3' sides of the lesion. The N-terminal half is responsible for the 3' incision and the C-terminal half is responsible for the 5' incision. This chain is UvrABC system protein C, found in Salmonella typhi.